A 393-amino-acid chain; its full sequence is Formate-dependent phosphoribosylglycinamide formyltransferase (393 aa).

Residues 22 to 23 and glutamate 82 each bind N(1)-(5-phospho-beta-D-ribosyl)glycinamide; that span reads EL. Residues arginine 114, lysine 155, 160–165, 195–198, and glutamate 203 each bind ATP; these read SSGKGQ and EGFI. Positions 119–308 constitute an ATP-grasp domain; that stretch reads RLAAEELDLP…QFALHARAIL (190 aa). Residues glutamate 267 and glutamate 279 each contribute to the Mg(2+) site. N(1)-(5-phospho-beta-D-ribosyl)glycinamide is bound by residues aspartate 286, lysine 356, and 363–364; that span reads RR.

Belongs to the PurK/PurT family. As to quaternary structure, homodimer.

The enzyme catalyses N(1)-(5-phospho-beta-D-ribosyl)glycinamide + formate + ATP = N(2)-formyl-N(1)-(5-phospho-beta-D-ribosyl)glycinamide + ADP + phosphate + H(+). It participates in purine metabolism; IMP biosynthesis via de novo pathway; N(2)-formyl-N(1)-(5-phospho-D-ribosyl)glycinamide from N(1)-(5-phospho-D-ribosyl)glycinamide (formate route): step 1/1. In terms of biological role, involved in the de novo purine biosynthesis. Catalyzes the transfer of formate to 5-phospho-ribosyl-glycinamide (GAR), producing 5-phospho-ribosyl-N-formylglycinamide (FGAR). Formate is provided by PurU via hydrolysis of 10-formyl-tetrahydrofolate. This chain is Formate-dependent phosphoribosylglycinamide formyltransferase, found in Pseudomonas fluorescens (strain Pf0-1).